A 781-amino-acid chain; its full sequence is MKTVLPSVPETVRLSRRGFLVQAGTITCSVAFGSVPAAAGDTAESTPSIAAVSPNVWVRVHADGIVDIVCPAVELGQGAHTALPRFVAEELDADWDRVRVQQAGASDKVYGNPLAWGTQFTAASRTTVGYFDVLRVAGAQARFVLVQTAARRWSVPADQLETQKGVVLHRRSRRSATYGELVASVQVPESFPHFFARNEATQPADDYFGAAPPSVVAQAAGPASGAIALKHRSTYRLIGKDAPRKDIPPKVNGQACYGMDVQVPGMLYAMVETGPVAGMAPERVDDGAARQVPGIHHVLSLPHGVAVVGRDIFAVRAARARLLVNWKANPDKQSYDSGQVLDEFSDLCRNGIERNAVQAWKQGELSSIDAVFARPDVRIESFEMQSDLVYQAPMEPQSAVIQPHADGSAEAWVGTQWPTVEQGFAAGILGIAPDKLTMHLPLVGGGFGRRLEPGALVDAAHIVRAIGKTVKVIWSREDDLKRNPFRQALACRVEAAVLEKDQRILALRHTVAADSWLARLFPQYFNAYQQTDPGNWIGGMVAYDVPLQRIDALTPRRSVDVCYMRGIGVAQVKFAQESLVDQIARRLNADPVDFRLAHLNTSPRGAAVVRTVAEMSDWKRRSADAGGGMALGLAYTPYSNAHVALVSEVHFNRSENTLSVSRVWCAVDVGMVAQPDIVKAQMEGGIIQGLSVALMERVQVAKGVLQHSNFHDYPMLRMSQVPQIHVRLVETDQAMAGVAELGLLQIGPAINNAFARITGQHLRSLPMRPALAQMKRSGPTA.

As to quaternary structure, heterodimer of an alpha chain and a beta chain.

The catalysed reaction is isoquinoline + A + H2O = isoquinolin-1(2H)-one + AH2. Specific towards N-containing N-heterocyclic substrates, including isoquinoline, isoquinolin-5-ol, phthalazine and quinazoline. In Brevundimonas diminuta (Pseudomonas diminuta), this protein is Isoquinoline 1-oxidoreductase subunit beta (iorB).